The chain runs to 819 residues: Mitosis inhibitor protein kinase SWE1 (819 aa).

A Phosphoserine; by CDC5 modification is found at Ser36. Thr45 is subject to Phosphothreonine; by CDC28. Residues Ser56 and Ser63 each carry the phosphoserine; by CDC28 modification. Ser70 carries the post-translational modification Phosphoserine. A Phosphothreonine; by CDC28 modification is found at Thr74. The tract at residues 86-105 (KIEEEEEEEEEGKDEESVDS) is disordered. Acidic residues predominate over residues 88–102 (EEEEEEEEEGKDEES). Ser102 bears the Phosphoserine; by CDC5 mark. Ser105 carries the phosphoserine; by CDC28 modification. Ser111 is subject to Phosphoserine; by CDC5, CDC28 and CLA4. Positions 117-168 (ESVTTPITKRSAEKTNSPISLKQWNQRWFPKNDARTENTSSSSSYSVAKPNQ) are disordered. The residue at position 118 (Ser118) is a Phosphoserine; by CDC5. Residues 118 to 142 (SVTTPITKRSAEKTNSPISLKQWNQ) show a composition bias toward polar residues. 2 positions are modified to phosphothreonine; by CDC28: Thr121 and Thr124. Ser127 is modified (phosphoserine; by CDC28). Thr131 carries the phosphothreonine; by CDC5 modification. Residue Ser133 is modified to Phosphoserine; by CDC28. Position 136 is a phosphoserine; by CDC28 and CLA4 (Ser136). Ser156 and Ser169 each carry phosphoserine; by CDC5. The residue at position 196 (Thr196) is a Phosphothreonine; by CDC28. Position 201 is a phosphoserine; by CDC28 (Ser201). A phosphoserine; by CDC5 mark is found at Ser225 and Ser254. Position 262 is a phosphoserine (Ser262). Phosphoserine; by CDC28 occurs at positions 263 and 266. The interval 278-297 (NQTNILSPTNSLVTNSSPQT) is disordered. A Phosphothreonine; by CDC5 modification is found at Thr280. A phosphoserine mark is found at Ser284 and Ser294. The residue at position 312 (Ser312) is a Phosphoserine; by CLA4. The segment at 341–395 (PIIISSHHSTRKNPQPYQFRGRYDNDTDEEISTPTRRKSIIGATSQTHRESRPLS) is disordered. The residue at position 345 (Ser345) is a Phosphoserine. 2 positions are modified to phosphothreonine; by CDC28: Thr367 and Thr373. A Phosphoserine; by CDC5 and CLA4 modification is found at Ser379. At Thr384 the chain carries Phosphothreonine; by CDC28. 2 positions are modified to phosphoserine; by CDC5 and CLA4: Ser395 and Ser438. One can recognise a Protein kinase domain in the interval 444–794 (FTNVHSIGKG…NQILQTEECL (351 aa)). Residues 450–458 (IGKGQFSTV) and Lys473 each bind ATP. Asp579 (proton acceptor) is an active-site residue. Mg(2+) contacts are provided by Asn584 and Asp597. Ser610 carries the phosphoserine; by CDC5 modification. Thr629 is modified (phosphothreonine; by CDC5). Phosphothreonine; by CDC5 and CLA4 is present on Thr688. Thr692 carries the post-translational modification Phosphothreonine. Polar residues predominate over residues 707–716 (SNNAGTSTVH). Residues 707 to 736 (SNNAGTSTVHNNSNINNPNMNNGNDNNNVN) are disordered. Over residues 717–736 (NNSNINNPNMNNGNDNNNVN) the composition is skewed to low complexity. Lys741 is covalently cross-linked (Glycyl lysine isopeptide (Lys-Gly) (interchain with G-Cter in ubiquitin)).

Belongs to the protein kinase superfamily. Ser/Thr protein kinase family. WEE1 subfamily. As to quaternary structure, interacts with CLB2-CDC28. Partial hyperphosphorylation of SWE1 by CLB2-CDC28 stabilizes the ternary complex of SWE1 and CLB2-CDC28 and stimulates kinase activity of SWE1 in a positive feedback loop, maintaining CLB2-CDC28 in the tyrosine-phosphorylated state. Fully hyperphosphorylated SWE1 dissociates from CLB2-CDC28. Interacts with HSL7, KCC4 and MET30. In terms of processing, ubiquitinated by the SCF(MET30) complex, leading to its degradation by the proteasome. Phosphorylated progressively by CLA4, CLB2-CDC28 and CDC5. CLA4-dependent phosphorylation occurs in late S phase, followed by phosphorylation by CLB2-CDC28 in early G2, when the levels of mitotic CLB2 increases. This phosphorylation is critical for triggering subsequent SWE1-CDC5 interaction and CDC5-dependent phosphorylation. The resulting cumulative hyperphosphorylation down-regulates SWE1 by targeting it for ubiquitin-mediated degradation. This stepwise phosphorylation is thought to be a mechanism to integrate the different checkpoint requirements before entry into mitosis.

It localises to the bud neck. The protein resides in the nucleus. The catalysed reaction is L-seryl-[protein] + ATP = O-phospho-L-seryl-[protein] + ADP + H(+). It catalyses the reaction L-threonyl-[protein] + ATP = O-phospho-L-threonyl-[protein] + ADP + H(+). In terms of biological role, protein kinase that acts as a negative regulator of entry into mitosis (G2 to M transition) by phosphorylating and inhibiting the mitosis-promoting cyclin B-bound CDC28 at 'Tyr-19'. SWE1-mediated inhibition of CDC28 acts in a cell size or morphogenesis checkpoint to delay mitosis in response to defects in growth, actin organization or bud formation. Inhibits the activity of B-type cyclins in replication initiation strongly for CLB2, moderately for CLB3 and CLB4, and there is no apparent inhibition for CLB5 and CLB6, correlating with the normal expression timing of those cyclins. Hyperphosphorylation and degradation of SWE1 when all checkpoint requirement are met releases CLB2-CDC28 from inhibition and allows for progression through the cell cycle. SWE1-dependent CDC28 phosphorylation is also required for pachytene arrest upon activation of the recombination checkpoint during meiosis. Also involved in the regulation of nitrogen starvation- and short chain alcohol-induced filamentous growth, or filamentous differentiation in response to slowed DNA synthesis. Can act both on serines and on tyrosines. This is Mitosis inhibitor protein kinase SWE1 (SWE1) from Saccharomyces cerevisiae (strain ATCC 204508 / S288c) (Baker's yeast).